The sequence spans 205 residues: MEVNIINVNSDRIGTIDLNPLIFSVNYRPDILKMVVDWQLSKRRAGTHKAKTIGDISGTTAKPHRQKHTGRARQGSLRSPQFRGGAVIFGPVVRSHAYSLNKKVRNLGLKVALSLKNSCNKLLILDSIDVNFVKTTQVLQFIKNFEHKSFLIIDKDYNKSVVCSCRNLHNVTLLKQIGTNVLDILRHDCIILTVGAVKYLEERLL.

Positions 54–78 (GDISGTTAKPHRQKHTGRARQGSLR) are disordered. Residues 62–71 (KPHRQKHTGR) are compositionally biased toward basic residues.

This sequence belongs to the universal ribosomal protein uL4 family. Part of the 50S ribosomal subunit.

One of the primary rRNA binding proteins, this protein initially binds near the 5'-end of the 23S rRNA. It is important during the early stages of 50S assembly. It makes multiple contacts with different domains of the 23S rRNA in the assembled 50S subunit and ribosome. Its function is as follows. Forms part of the polypeptide exit tunnel. This Ehrlichia chaffeensis (strain ATCC CRL-10679 / Arkansas) protein is Large ribosomal subunit protein uL4.